A 228-amino-acid chain; its full sequence is Cytochrome c oxidase subunit 2 (228 aa).

At 1-26 (MATWANLGLQDSSSPLMEQLNFFHDH) the chain is on the mitochondrial intermembrane side. The helical transmembrane segment at 27–47 (TLLILTMITILVGYIMGMLMF) threads the bilayer. Residues 48–60 (NQFTNRYLLHGQT) are Mitochondrial matrix-facing. Residues 61-81 (IEIIWTVLPAIILMFIALPSL) traverse the membrane as a helical segment. The Mitochondrial intermembrane portion of the chain corresponds to 82–228 (RLLYLMDEIN…FIKWITNMTN (147 aa)). Residues His-161, Cys-196, Glu-198, Cys-200, His-204, and Met-207 each contribute to the Cu cation site. Mg(2+) is bound at residue Glu-198.

The protein belongs to the cytochrome c oxidase subunit 2 family. Component of the cytochrome c oxidase (complex IV, CIV), a multisubunit enzyme composed of a catalytic core of 3 subunits and several supernumerary subunits. The complex exists as a monomer or a dimer and forms supercomplexes (SCs) in the inner mitochondrial membrane with ubiquinol-cytochrome c oxidoreductase (cytochrome b-c1 complex, complex III, CIII). Cu cation serves as cofactor.

The protein localises to the mitochondrion inner membrane. It carries out the reaction 4 Fe(II)-[cytochrome c] + O2 + 8 H(+)(in) = 4 Fe(III)-[cytochrome c] + 2 H2O + 4 H(+)(out). Component of the cytochrome c oxidase, the last enzyme in the mitochondrial electron transport chain which drives oxidative phosphorylation. The respiratory chain contains 3 multisubunit complexes succinate dehydrogenase (complex II, CII), ubiquinol-cytochrome c oxidoreductase (cytochrome b-c1 complex, complex III, CIII) and cytochrome c oxidase (complex IV, CIV), that cooperate to transfer electrons derived from NADH and succinate to molecular oxygen, creating an electrochemical gradient over the inner membrane that drives transmembrane transport and the ATP synthase. Cytochrome c oxidase is the component of the respiratory chain that catalyzes the reduction of oxygen to water. Electrons originating from reduced cytochrome c in the intermembrane space (IMS) are transferred via the dinuclear copper A center (CU(A)) of subunit 2 and heme A of subunit 1 to the active site in subunit 1, a binuclear center (BNC) formed by heme A3 and copper B (CU(B)). The BNC reduces molecular oxygen to 2 water molecules using 4 electrons from cytochrome c in the IMS and 4 protons from the mitochondrial matrix. The sequence is that of Cytochrome c oxidase subunit 2 (COXII) from Anopheles quadrimaculatus (Common malaria mosquito).